A 479-amino-acid chain; its full sequence is Aldehyde dehydrogenase family 3 member B3 (479 aa).

Residues E223 and C257 contribute to the active site. C476 carries S-geranylgeranyl cysteine lipidation. A propeptide spans 477–479 (TLL) (removed in mature form).

This sequence belongs to the aldehyde dehydrogenase family. Geranylgeranylation is important for membrane localization and enzyme activity. As to expression, expressed in testis, kidney, small intestine, spleen, white adipose tissue, liver and lung.

The protein resides in the cell membrane. The catalysed reaction is an aldehyde + NAD(+) + H2O = a carboxylate + NADH + 2 H(+). It carries out the reaction hexadecanoate + NADH + 2 H(+) = hexadecanal + NAD(+) + H2O. The enzyme catalyses octanal + NAD(+) + H2O = octanoate + NADH + 2 H(+). Its function is as follows. Oxidizes medium and long chain aldehydes into non-toxic fatty acids. This chain is Aldehyde dehydrogenase family 3 member B3, found in Mus musculus (Mouse).